A 321-amino-acid polypeptide reads, in one-letter code: Protein FAM110C (321 aa).

Disordered regions lie at residues 1–84 and 111–203; these read MRAL…APAP and RGSG…SQSD. Composition is skewed to basic and acidic residues over residues 15-46 and 131-145; these read LLPR…DRAK and GKDK…DEGK. Residues 169–181 are compositionally biased toward low complexity; it reads APAARSAAPSSVP. S241 carries the phosphoserine modification.

This sequence belongs to the FAM110 family. In terms of assembly, interacts with AKT1; the interaction is transient and follows AKT1 activation. Interacts with PPP2CA and alpha-tubulin. As to expression, detected in stomach, thyroid, trachea, adrenal gland and testis, and at low levels in prostate, ovary, intestine, colon, spinal cord and lymph node.

Its subcellular location is the cytoplasm. The protein resides in the cytoskeleton. It is found in the microtubule organizing center. The protein localises to the centrosome. It localises to the spindle pole. Its subcellular location is the nucleus. Its function is as follows. May play a role in microtubule organization. May play a role in cell spreading and cell migration of epithelial cells; the function may involve the AKT1 signaling pathway. The polypeptide is Protein FAM110C (FAM110C) (Homo sapiens (Human)).